A 478-amino-acid polypeptide reads, in one-letter code: GDP-fucose protein O-fucosyltransferase 3 (478 aa).

Over 1–8 (MVWIQRRR) the chain is Cytoplasmic. A helical; Signal-anchor for type II membrane protein transmembrane segment spans residues 9-31 (LLASCLCITATVFLLVTLQVVVE). Topologically, residues 32–478 (LGKFERKKFK…QEFWALVFKD (447 aa)) are lumenal. 2 N-linked (GlcNAc...) asparagine glycosylation sites follow: N110 and N168. A disulfide bridge connects residues C389 and C392.

The protein belongs to the glycosyltransferase 10 family.

The protein localises to the endoplasmic reticulum membrane. It catalyses the reaction L-threonyl-[protein] + GDP-beta-L-fucose = 3-O-(alpha-L-fucosyl)-L-threonyl-[protein] + GDP + H(+). It carries out the reaction L-seryl-[protein] + GDP-beta-L-fucose = 3-O-(alpha-L-fucosyl)-L-seryl-[protein] + GDP + H(+). It functions in the pathway protein modification; protein glycosylation. Functionally, protein O-fucosyltransferase that specifically catalyzes O-fucosylation of serine or threonine residues in EMI domains of target proteins, such as MMRN1, MMRN2 and EMID1. Attaches fucose through an O-glycosidic linkage. O-fucosylation of EMI domain-containing proteins may be required for facilitating protein folding and secretion. May also show alpha-(1,3)-fucosyltransferase activity toward the innermost N-acetyl glucosamine (GlcNAc) residue in biantennary N-glycan acceptors. However, this was tested with a library of synthetic substrates and this activity is unsure in vivo. May be involved in biosynthesis of Lewis X-carrying biantennary N-glycans that regulate neuron stem cell self-renewal during brain development. This is GDP-fucose protein O-fucosyltransferase 3 (FUT10) from Canis lupus familiaris (Dog).